The sequence spans 181 residues: Iron sulfur cluster assembly protein 1, mitochondrial (181 aa).

The tract at residues 159–181 (RKTKNPTLGAEAAETPAAATATA) is disordered. Positions 168–181 (AEAAETPAAATATA) are enriched in low complexity.

It belongs to the NifU family. As to quaternary structure, component of the core Fe-S cluster (ISC) assembly machinery. [2Fe-2S] cluster is required as a cofactor.

The protein localises to the mitochondrion matrix. Its pathway is cofactor biosynthesis; iron-sulfur cluster biosynthesis. Scaffold protein for the de novo synthesis of iron-sulfur (Fe-S) clusters within mitochondria, which is required for maturation of both mitochondrial and cytoplasmic [2Fe-2S] and [4Fe-4S] proteins. First, a [2Fe-2S] cluster is transiently assembled on the scaffold protein ISU1. In a second step, the cluster is released from ISU1, transferred to a glutaredoxin, followed by the formation of mitochondrial [2Fe-2S] proteins, the synthesis of [4Fe-4S] clusters and their target-specific insertion into the recipient apoproteins. Cluster assembly on ISU1 depends on the function of the cysteine desulfurase complex NFS1-ISD11, which serves as the sulfur donor for cluster synthesis, the iron-binding protein frataxin as the putative iron donor, and the electron transfer chain comprised of ferredoxin reductase and ferredoxin, which receive their electrons from NADH. This Yarrowia lipolytica (strain CLIB 122 / E 150) (Yeast) protein is Iron sulfur cluster assembly protein 1, mitochondrial (ISU1).